Reading from the N-terminus, the 187-residue chain is MSGGGTETPVACEAAQGGGGKKRDSLGTAGAAHLIIKDLGEIHSRLLDHRPVTQGEIRYFVKEFEEKRGLRELRVLENLKNMIQETNERMLPKCRETMQGGLEETLQRLQAATDSIHRLQQREQERKKVINDHLTASEKQRMLQWEEFLRGQPQRRAEVDAEHRKAMERLREQYAAMEKDLAKFSTF.

The segment at 1 to 27 (MSGGGTETPVACEAAQGGGGKKRDSLG) is disordered. Ser2 is modified (N-acetylserine).

It belongs to the BLOC1S5 family. As to quaternary structure, octamer composed of one copy each BLOC1S1, BLOC1S2, BLOC1S3, BLOC1S4, BLOC1S5, BLOC1S6, DTNBP1/BLOC1S7 and SNAPIN/BLOC1S8. The BLOC-1 complex associates with the AP-3 protein complex and membrane protein cargos. Interacts with BLOC1S4, BLOC1S6, DTNBP1/BLOC1S7 and PI4K2A. Component of the biogenesis of lysosome-related organelles complex 1 (BLOC-1) composed of BLOC1S1, BLOC1S2, BLOC1S3, BLOC1S4, BLOC1S5, BLOC1S6, DTNBP1/BLOC1S7 and SNAPIN/BLOC1S8.

In terms of biological role, component of the BLOC-1 complex, a complex that is required for normal biogenesis of lysosome-related organelles (LRO), such as platelet dense granules and melanosomes. In concert with the AP-3 complex, the BLOC-1 complex is required to target membrane protein cargos into vesicles assembled at cell bodies for delivery into neurites and nerve terminals. The BLOC-1 complex, in association with SNARE proteins, is also proposed to be involved in neurite extension. Plays a role in intracellular vesicle trafficking. This chain is Biogenesis of lysosome-related organelles complex 1 subunit 5 (Bloc1s5), found in Rattus norvegicus (Rat).